Consider the following 127-residue polypeptide: Glycine cleavage system H protein (127 aa).

The Lipoyl-binding domain maps to 22–104 (TVRIGITDFA…YDKAWMIVIE (83 aa)). Lys-63 bears the N6-lipoyllysine mark.

Belongs to the GcvH family. The glycine cleavage system is composed of four proteins: P, T, L and H. (R)-lipoate is required as a cofactor.

Its function is as follows. The glycine cleavage system catalyzes the degradation of glycine. The H protein shuttles the methylamine group of glycine from the P protein to the T protein. In terms of biological role, is also involved in protein lipoylation via its role as an octanoyl/lipoyl carrier protein intermediate. The protein is Glycine cleavage system H protein of Anoxybacillus flavithermus (strain DSM 21510 / WK1).